Consider the following 56-residue polypeptide: uncharacterized protein (56 aa).

The helical transmembrane segment at 30–52 threads the bilayer; that stretch reads IKIGIICVIITWAIFSINHHHTI.

The protein localises to the membrane. This is an uncharacterized protein from Dictyostelium discoideum (Social amoeba).